A 196-amino-acid chain; its full sequence is ATP-dependent Clp protease proteolytic subunit (196 aa).

The active-site Nucleophile is the S98. H123 is a catalytic residue.

Belongs to the peptidase S14 family. In terms of assembly, fourteen ClpP subunits assemble into 2 heptameric rings which stack back to back to give a disk-like structure with a central cavity, resembling the structure of eukaryotic proteasomes.

The protein localises to the cytoplasm. It carries out the reaction Hydrolysis of proteins to small peptides in the presence of ATP and magnesium. alpha-casein is the usual test substrate. In the absence of ATP, only oligopeptides shorter than five residues are hydrolyzed (such as succinyl-Leu-Tyr-|-NHMec, and Leu-Tyr-Leu-|-Tyr-Trp, in which cleavage of the -Tyr-|-Leu- and -Tyr-|-Trp bonds also occurs).. Cleaves peptides in various proteins in a process that requires ATP hydrolysis. Has a chymotrypsin-like activity. Plays a major role in the degradation of misfolded proteins. This is ATP-dependent Clp protease proteolytic subunit from Actinobacillus pleuropneumoniae serotype 5b (strain L20).